The chain runs to 242 residues: Probable transcriptional regulatory protein XCV3282 (242 aa).

Belongs to the TACO1 family.

The protein localises to the cytoplasm. The sequence is that of Probable transcriptional regulatory protein XCV3282 from Xanthomonas euvesicatoria pv. vesicatoria (strain 85-10) (Xanthomonas campestris pv. vesicatoria).